Here is a 276-residue protein sequence, read N- to C-terminus: Large ribosomal subunit protein uL2 (276 aa).

The disordered stretch occupies residues 219-276 (TVRGSAMNPNDHPHGGGEGRSPIGRPSPVTPWGKPALGYKTRKKNKHSDKFIVTGRKR).

This sequence belongs to the universal ribosomal protein uL2 family. As to quaternary structure, part of the 50S ribosomal subunit. Forms a bridge to the 30S subunit in the 70S ribosome.

Its function is as follows. One of the primary rRNA binding proteins. Required for association of the 30S and 50S subunits to form the 70S ribosome, for tRNA binding and peptide bond formation. It has been suggested to have peptidyltransferase activity; this is somewhat controversial. Makes several contacts with the 16S rRNA in the 70S ribosome. This is Large ribosomal subunit protein uL2 from Alkaliphilus metalliredigens (strain QYMF).